The primary structure comprises 1976 residues: Protein TIC 214 (1976 aa).

The next 6 helical transmembrane spans lie at 11-31 (LLLLWINIVNSVVMVGLYYGF), 64-84 (FIMGQFIVFISTYYPPLHLAL), 87-107 (PHTLTVLVIPYLLSHFWFFWN), 126-146 (LSIQYVFLNNLIFQLFNHFVL), 173-193 (FFGWLIGHMLLMKCIGLVLSW), and 221-241 (IFSILLFIICICYLGRMPSPI). The span at 619-635 (FEEEEEEEEEDDQEEST) shows a compositional bias: acidic residues. 2 disordered regions span residues 619-642 (FEEEEEEEEEDDQEESTDDHGIRS) and 830-861 (SSYVGEGAKEKEKIEEEHEEEKGEYKRKEDKR). Residues 836-861 (GAKEKEKIEEEHEEEKGEYKRKEDKR) are compositionally biased toward basic and acidic residues. Helical transmembrane passes span 1054-1074 (IIKIVLFIKIKVKEVFFFFVL) and 1202-1222 (IYMSILLCITNIYRIYVQFFL). Basic and acidic residues predominate over residues 1633 to 1665 (QKERFHPKPKVESNQKGYLELENRNRDEKERQH). Residues 1633-1669 (QKERFHPKPKVESNQKGYLELENRNRDEKERQHQGNL) form a disordered region.

This sequence belongs to the TIC214 family. Part of the Tic complex.

It localises to the plastid. The protein localises to the chloroplast inner membrane. Its function is as follows. Involved in protein precursor import into chloroplasts. May be part of an intermediate translocation complex acting as a protein-conducting channel at the inner envelope. The chain is Protein TIC 214 from Nymphaea alba (White water-lily).